Here is a 155-residue protein sequence, read N- to C-terminus: Protein FAM162A (155 aa).

Positions 77-103 (RFKKEEEIPETISFEMLDAAKNKLRVK) are required for proapoptotic activity. The helical transmembrane segment at 104-121 (VSYLMIALTVAGCIYMVI) threads the bilayer.

The protein belongs to the UPF0389 family. As to quaternary structure, interacts with HSP90AB1; HSP90AB1 is essential for FAM162A mitochondrial localization and pro-apoptotic activity. Interacts with VDAC2; the interaction is probably involved in inducing mitochondrial permeability transition.

Its subcellular location is the mitochondrion membrane. In terms of biological role, proposed to be involved in regulation of apoptosis; the exact mechanism may differ between cell types/tissues. May be involved in hypoxia-induced cell death of transformed cells implicating cytochrome C release and caspase activation (such as CASP9) and inducing mitochondrial permeability transition. May be involved in hypoxia-induced cell death of neuronal cells probably by promoting release of AIFM1 from mitochondria to cytoplasm and its translocation to the nucleus; however, the involvement of caspases has been reported conflictingly. This chain is Protein FAM162A (Fam162a), found in Mus musculus (Mouse).